The primary structure comprises 321 residues: Cytochrome c biogenesis protein CcsA (321 aa).

Transmembrane regions (helical) follow at residues 17–37, 43–63, 143–163, 225–245, 258–275, and 287–307; these read IISI…IVGI, KGII…WIYS, MLLS…FLVI, VISL…VWAN, ETWA…LHTR, and IVAS…NLLG.

It belongs to the CcmF/CycK/Ccl1/NrfE/CcsA family. In terms of assembly, may interact with Ccs1.

The protein resides in the plastid. It localises to the chloroplast thylakoid membrane. Required during biogenesis of c-type cytochromes (cytochrome c6 and cytochrome f) at the step of heme attachment. The protein is Cytochrome c biogenesis protein CcsA of Drimys granadensis.